We begin with the raw amino-acid sequence, 296 residues long: Ceramide synthase LOH2 (296 aa).

The next 6 membrane-spanning stretches (helical) occupy residues Val-19–Leu-39, Leu-80–Ala-100, Leu-121–Glu-141, Ile-158–Ala-178, Phe-206–Ile-226, and Met-254–Val-274. The 208-residue stretch at Val-71–Lys-278 folds into the TLC domain. Phosphoserine is present on residues Ser-289 and Ser-291.

In terms of tissue distribution, expressed ubiquitously with highest levels in pollen.

It is found in the endoplasmic reticulum membrane. The catalysed reaction is a sphingoid base + hexadecanoyl-CoA = an N-hexadecanoyl-sphingoid base + CoA + H(+). It catalyses the reaction sphinganine + hexadecanoyl-CoA = N-hexadecanoylsphinganine + CoA + H(+). The enzyme catalyses sphing-4-enine + hexadecanoyl-CoA = N-hexadecanoylsphing-4-enine + CoA + H(+). It carries out the reaction sphinga-(4E,8E)-dienine + hexadecanoyl-CoA = N-hexadecanoylsphinga-(4E,8E)-dienine + CoA + H(+). The catalysed reaction is sphinga-(4E,8Z)-dienine + hexadecanoyl-CoA = N-hexadecanoylsphinga-(4E,8Z)-dienine + CoA + H(+). It functions in the pathway sphingolipid metabolism. With respect to regulation, inhibited by the mycotoxin fumonisin B(1), a sphingosine analog mycotoxins produced by pathogenic fungi. Activated by divalent cation such as magnesium Mg(2+), zinc Zn(2+), manganese Mn(2+) and calcium Ca(2+). In terms of biological role, prevents cell division in root meristems and promotes salicylic acid (SA) production and hypersensitive response (HR). Catalyzes the biosynthesis of ceramide sphingolipids with C(16) fatty acids, structural membrane lipids involved in membrane trafficking (e.g. early endosomes) and cell polarity (e.g. polar auxin transport related proteins); accepts only C16:0 fatty acids, but with a wide range of d18 sphingoid bases, such as sphinganine (d18:0) and palmitoyl-CoA. Mediates resistance to sphinganine-analog mycotoxins (SAMs, e.g. fumonisin B(1)) by restoring the sphingolipid biosynthesis. Could salvage the transport of GPI-anchored proteins from the endoplasmic reticulum to the Golgi apparatus in ceramides-depleted cells after SAM exposure. Contributes to hypoxic conditions tolerance (e.g. submergences), especially in the dark, by promoting the formation of very-long-chain (VLC) ceramide species (22:1, 24:1 and 26:1) and of VLC unsaturated ceramides, which are modulating CTR1-mediated ethylene signaling leading to endoplasmic reticulum (ER)-to-nucleus translocation of EIN2 and EIN3. The sequence is that of Ceramide synthase LOH2 from Arabidopsis thaliana (Mouse-ear cress).